Reading from the N-terminus, the 375-residue chain is 23S rRNA (uracil(747)-C(5))-methyltransferase RlmC (375 aa).

4 residues coordinate [4Fe-4S] cluster: cysteine 3, cysteine 11, cysteine 14, and cysteine 87. S-adenosyl-L-methionine is bound by residues glutamine 212, phenylalanine 241, glutamate 262, and asparagine 307. Residue cysteine 334 is the Nucleophile of the active site.

Belongs to the class I-like SAM-binding methyltransferase superfamily. RNA M5U methyltransferase family. RlmC subfamily.

The enzyme catalyses uridine(747) in 23S rRNA + S-adenosyl-L-methionine = 5-methyluridine(747) in 23S rRNA + S-adenosyl-L-homocysteine + H(+). Functionally, catalyzes the formation of 5-methyl-uridine at position 747 (m5U747) in 23S rRNA. The chain is 23S rRNA (uracil(747)-C(5))-methyltransferase RlmC from Shigella boydii serotype 18 (strain CDC 3083-94 / BS512).